The primary structure comprises 283 residues: Thymidylate synthase (283 aa).

Arg-22 is a dUMP binding site. The active-site Nucleophile is the Cys-160. Residues 180–183 (RSCD), Asn-191, and 221–223 (HIY) contribute to the dUMP site. Asp-183 is a binding site for (6R)-5,10-methylene-5,6,7,8-tetrahydrofolate. Residue Ser-282 participates in (6R)-5,10-methylene-5,6,7,8-tetrahydrofolate binding.

This sequence belongs to the thymidylate synthase family. Bacterial-type ThyA subfamily. In terms of assembly, homodimer.

It is found in the cytoplasm. It catalyses the reaction dUMP + (6R)-5,10-methylene-5,6,7,8-tetrahydrofolate = 7,8-dihydrofolate + dTMP. The protein operates within pyrimidine metabolism; dTTP biosynthesis. Functionally, catalyzes the reductive methylation of 2'-deoxyuridine-5'-monophosphate (dUMP) to 2'-deoxythymidine-5'-monophosphate (dTMP) while utilizing 5,10-methylenetetrahydrofolate (mTHF) as the methyl donor and reductant in the reaction, yielding dihydrofolate (DHF) as a by-product. This enzymatic reaction provides an intracellular de novo source of dTMP, an essential precursor for DNA biosynthesis. The chain is Thymidylate synthase from Photobacterium profundum (strain SS9).